Here is a 282-residue protein sequence, read N- to C-terminus: Insulin-like growth factor-binding protein 7 (282 aa).

Residues 1–26 form the signal peptide; the sequence is MERPSLRALLLGAAGLLLLLLPLSSS. An IGFBP N-terminal domain is found at 28 to 114; that stretch reads SSDTCGPCEP…PGVSGVCVCK (87 aa). 7 cysteine pairs are disulfide-bonded: Cys32–Cys57, Cys35–Cys59, Cys40–Cys60, Cys48–Cys63, Cys71–Cys87, Cys81–Cys111, and Cys120–Cys156. One can recognise a Kazal-like domain in the interval 105 to 158; it reads PGVSGVCVCKSRYPVCGSDGTTYPSGCQLRAASQRAESRGEKAITQVSKGTCEQ. The 105-residue stretch at 160-264 folds into the Ig-like C2-type domain; it reads PSIVTPPKDI…GQASASAKIT (105 aa). Asn171 carries N-linked (GlcNAc...) asparagine glycosylation. An intrachain disulfide couples Cys181 to Cys248. The residue at position 239 (Ser239) is a Phosphoserine; by FAM20C.

May interact with VPS24/CHMP3; the relevance of such interaction however remains unclear. Interacts with CD93; this interaction plays a role in endothelial cells angiogenesis. Post-translationally, N-glycosylated.

It is found in the secreted. Binds IGF1 and IGF2 with a relatively low affinity. Stimulates prostacyclin (PGI2) production. Stimulates cell adhesion. Acts as a ligand for CD93 to play a role in angiogenesis. The sequence is that of Insulin-like growth factor-binding protein 7 (IGFBP7) from Homo sapiens (Human).